Here is a 127-residue protein sequence, read N- to C-terminus: Fluoride-specific ion channel FluC (127 aa).

4 consecutive transmembrane segments (helical) span residues 4–24 (IMLA…WLGL), 35–55 (VGTL…LAWF), 71–91 (TGLC…VFLL), and 101–121 (LNVA…FWLF). Na(+) contacts are provided by Gly-75 and Thr-78.

The protein belongs to the fluoride channel Fluc/FEX (TC 1.A.43) family.

It is found in the cell inner membrane. It carries out the reaction fluoride(in) = fluoride(out). Na(+) is not transported, but it plays an essential structural role and its presence is essential for fluoride channel function. Fluoride-specific ion channel. Important for reducing fluoride concentration in the cell, thus reducing its toxicity. The chain is Fluoride-specific ion channel FluC from Cronobacter sakazakii (strain ATCC BAA-894) (Enterobacter sakazakii).